A 221-amino-acid chain; its full sequence is Riboflavin kinase (221 aa).

The interval 1-92 (MVTPEDLECL…YRLFGRQEKS (92 aa)) is H-T-H motif-like. Residues 93–221 (LMLNGTVQSG…GDEVTIEVTL (129 aa)) are riboflavin kinase. 102-107 (GLGEGA) contributes to the CDP binding site. Mg(2+)-binding residues include T131 and N133. FMN contacts are provided by T188 and E196. 201–204 (EGLR) lines the CDP pocket.

This sequence belongs to the archaeal riboflavin kinase family. The cofactor is Mg(2+).

It carries out the reaction riboflavin + CTP = CDP + FMN + H(+). It participates in cofactor biosynthesis; FMN biosynthesis; FMN from riboflavin (CTP route): step 1/1. Functionally, catalyzes the CTP-dependent phosphorylation of riboflavin (vitamin B2) to form flavin mononucleotide (FMN). This chain is Riboflavin kinase (ribK), found in Methanospirillum hungatei JF-1 (strain ATCC 27890 / DSM 864 / NBRC 100397 / JF-1).